Here is a 345-residue protein sequence, read N- to C-terminus: MIELTNITKTFAGKQGDIQALKDVSLSVGKGEIYGVIGYSGAGKSTLIRCVNLLEQPDQGSVKVNDVELTTLKSGKLRETRSHIGMIFQGFNLLKTATVYDNIAIPLKLTGLNKKAVKDRVQKYLDIVGLADKHDAYPSELSGGQKQRVAIARALSHEPEVLLSDEATSALDPDTTEAILDLLLRINKELGITILLITHEMNVIQRVCDRVAVMENGEVIEEGYTKDIFISPQLRTTKRFVNSLFSHDIPDDLIDGLSENGQVAKLSFFGESSGDPALALVTKKYDIYPNILSGSITRIKDEAFGQLLVHFKGEQAEINDSFQFLQDQQVHVKGVTYDGENQRVS.

Positions 2 to 241 constitute an ABC transporter domain; the sequence is IELTNITKTF…PQLRTTKRFV (240 aa). 38–45 contributes to the ATP binding site; that stretch reads GYSGAGKS.

Belongs to the ABC transporter superfamily. Methionine importer (TC 3.A.1.24) family. The complex is composed of two ATP-binding proteins (MetN), two transmembrane proteins (MetI) and a solute-binding protein (MetQ).

The protein resides in the cell membrane. The enzyme catalyses L-methionine(out) + ATP + H2O = L-methionine(in) + ADP + phosphate + H(+). It catalyses the reaction D-methionine(out) + ATP + H2O = D-methionine(in) + ADP + phosphate + H(+). Functionally, part of the ABC transporter complex MetNIQ involved in methionine import. Responsible for energy coupling to the transport system. This Oceanobacillus iheyensis (strain DSM 14371 / CIP 107618 / JCM 11309 / KCTC 3954 / HTE831) protein is Methionine import ATP-binding protein MetN 4.